The chain runs to 1876 residues: 1,3-beta-glucan synthase component FKS1 (1876 aa).

Composition is skewed to polar residues over residues 1-25 (MNTD…QSQE) and 60-71 (QPPNESYDQDYT). A disordered region spans residues 1 to 108 (MNTDQQPYQG…PGTPGYDSYG (108 aa)). Over 1-454 (MNTDQQPYQG…WLHLVTNFNR (454 aa)) the chain is Cytoplasmic. Residue lysine 259 forms a Glycyl lysine isopeptide (Lys-Gly) (interchain with G-Cter in ubiquitin) linkage. Threonine 269 and threonine 272 each carry phosphothreonine. Glycyl lysine isopeptide (Lys-Gly) (interchain with G-Cter in ubiquitin) cross-links involve residues lysine 275 and lysine 386. The helical transmembrane segment at 455–475 (IWVMHISIFWMYFAYNSPTFY) threads the bilayer. Over 476-492 (THNYQQLVDNQPLAAYK) the chain is Extracellular. Residues 493-513 (WASCALGGTVASLIQIVATLC) traverse the membrane as a helical segment. The Cytoplasmic segment spans residues 514–531 (EWSFVPRKWAGAQHLSRR). The helical transmembrane segment at 532–552 (FWFLCIIFGINLGPIIFVFAY) threads the bilayer. Over 553–563 (DKDTVYSTAAH) the chain is Extracellular. Residues 564–584 (VVAAVMFFVAVATIIFFSIMP) traverse the membrane as a helical segment. The Cytoplasmic segment spans residues 585 to 621 (LGGLFTSYMKKSTRRYVASQTFTAAFAPLHGLDRWMS). The chain crosses the membrane as a helical span at residues 622-642 (YLVWVTVFAAKYSESYYFLVL). Topologically, residues 643–678 (SLRDPIRILSTTAMRCTGEYWWGAVLCKVQPKIVLG) are extracellular. Residues 679-699 (LVIATDFILFFLDTYLWYIIV) form a helical membrane-spanning segment. Residues 700–1358 (NTIFSVGKSF…QPAVDWVRRY (659 aa)) are Cytoplasmic-facing. Residues lysine 910 and lysine 915 each participate in a glycyl lysine isopeptide (Lys-Gly) (interchain with G-Cter in ubiquitin) cross-link. A helical transmembrane segment spans residues 1359–1379 (TLSIFIVFWIAFVPIVVQELI). Over 1380-1444 (ERGLWKATQR…RIPFSILYSR (65 aa)) the chain is Extracellular. The chain crosses the membrane as a helical span at residues 1445–1465 (FAGSAIYMGARSMLMLLFGTV). Topologically, residues 1466 to 1469 (AHWQ) are cytoplasmic. The chain crosses the membrane as a helical span at residues 1470–1490 (APLLWFWASLSSLIFAPFVFN). Topologically, residues 1491–1560 (PHQFAWEDFF…DASRAHRTNL (70 aa)) are extracellular. Glycyl lysine isopeptide (Lys-Gly) (interchain with G-Cter in ubiquitin) cross-links involve residues lysine 1539 and lysine 1547. The helical transmembrane segment at 1561–1581 (IMAEIIPCAIYAAGCFIAFTF) threads the bilayer. At 1582-1601 (INAQTGVKTTDDDRVNSVLR) the chain is on the cytoplasmic side. A helical membrane pass occupies residues 1602-1622 (IIICTLAPIAVNLGVLFFCMG). Residues 1623-1643 (MSCCSGPLFGMCCKKTGSVMA) are Extracellular-facing. A helical transmembrane segment spans residues 1644–1664 (GIAHGVAVIVHIAFFIVMWVL). The Cytoplasmic segment spans residues 1665–1672 (ESFNFVRM). The chain crosses the membrane as a helical span at residues 1673 to 1695 (LIGVVTCIQCQRLIFHCMTALML). Topologically, residues 1696-1802 (TREFKNDHAN…RKRMVKKYCS (107 aa)) are extracellular. The helical transmembrane segment at 1803–1823 (LYFLVLAIFAGCIIGPAVASA) threads the bilayer. The Cytoplasmic portion of the chain corresponds to 1824-1876 (KIHKHIGDSLDGVVHNLFQPINTTNNDTGSQMSTYQSHYYTHTPSLKTWSTIK).

The protein belongs to the glycosyltransferase 48 family. Component of the 1,3-beta-glucan synthase (GS) complex, composed of two alternate catalytic subunits FKS1 or GSC2, and a regulatory subunit RHO1. Interacts with RHO1, which is a GTP-binding protein.

Its subcellular location is the mitochondrion. It localises to the cell membrane. The catalysed reaction is [(1-&gt;3)-beta-D-glucosyl](n) + UDP-alpha-D-glucose = [(1-&gt;3)-beta-D-glucosyl](n+1) + UDP + H(+). In terms of biological role, alternate catalytic subunit of the 1,3-beta-glucan synthase (GS) complex. Synthesizes 1,3-beta-glucan, a major structural component of the yeast cell wall. Involved in cell wall synthesis, maintenance and remodeling. In Saccharomyces cerevisiae (strain ATCC 204508 / S288c) (Baker's yeast), this protein is 1,3-beta-glucan synthase component FKS1 (FKS1).